Here is a 785-residue protein sequence, read N- to C-terminus: uncharacterized protein (785 aa).

One can recognise a DOD-type homing endonuclease domain in the interval 293–421 (LVGYFLSEGY…LRLISLRLGF (129 aa)).

In terms of processing, this protein undergoes a protein self splicing that involves a post-translational excision of the intervening region (intein) followed by peptide ligation.

This is an uncharacterized protein from Methanocaldococcus jannaschii (strain ATCC 43067 / DSM 2661 / JAL-1 / JCM 10045 / NBRC 100440) (Methanococcus jannaschii).